We begin with the raw amino-acid sequence, 409 residues long: uncharacterized protein (409 aa).

The signal sequence occupies residues 1 to 39; it reads MVSDSKLELPLPVNQQKPRRRRILKVHLLIAALILSAVG. Residues histidine 67, aspartate 69, glutamate 181, histidine 250, and histidine 271 each coordinate Zn(2+).

The protein belongs to the metallo-dependent hydrolases superfamily. Peptidase M19 family. Interacts with dil1. Requires Zn(2+) as cofactor.

It catalyses the reaction an L-aminoacyl-L-amino acid + H2O = 2 an L-alpha-amino acid. This is an uncharacterized protein from Schizosaccharomyces pombe (strain 972 / ATCC 24843) (Fission yeast).